A 109-amino-acid chain; its full sequence is Large ribosomal subunit protein uL22 (109 aa).

This sequence belongs to the universal ribosomal protein uL22 family. In terms of assembly, part of the 50S ribosomal subunit.

Functionally, this protein binds specifically to 23S rRNA; its binding is stimulated by other ribosomal proteins, e.g. L4, L17, and L20. It is important during the early stages of 50S assembly. It makes multiple contacts with different domains of the 23S rRNA in the assembled 50S subunit and ribosome. Its function is as follows. The globular domain of the protein is located near the polypeptide exit tunnel on the outside of the subunit, while an extended beta-hairpin is found that lines the wall of the exit tunnel in the center of the 70S ribosome. The polypeptide is Large ribosomal subunit protein uL22 (Thiobacillus denitrificans (strain ATCC 25259 / T1)).